The primary structure comprises 341 residues: Glycerol-3-phosphate dehydrogenase [NAD(P)+] (341 aa).

NADPH is bound by residues Ser-14, Phe-15, Arg-35, and Lys-108. Sn-glycerol 3-phosphate contacts are provided by Lys-108 and Gly-136. An NADPH-binding site is contributed by Ala-140. Sn-glycerol 3-phosphate-binding residues include Lys-191, Asp-244, Ser-254, Arg-255, and Asn-256. Lys-191 serves as the catalytic Proton acceptor. Arg-255 is an NADPH binding site. Positions 279 and 281 each coordinate NADPH.

The protein belongs to the NAD-dependent glycerol-3-phosphate dehydrogenase family.

It localises to the cytoplasm. The enzyme catalyses sn-glycerol 3-phosphate + NAD(+) = dihydroxyacetone phosphate + NADH + H(+). It catalyses the reaction sn-glycerol 3-phosphate + NADP(+) = dihydroxyacetone phosphate + NADPH + H(+). Its pathway is membrane lipid metabolism; glycerophospholipid metabolism. Functionally, catalyzes the reduction of the glycolytic intermediate dihydroxyacetone phosphate (DHAP) to sn-glycerol 3-phosphate (G3P), the key precursor for phospholipid synthesis. This Pseudomonas syringae pv. syringae (strain B728a) protein is Glycerol-3-phosphate dehydrogenase [NAD(P)+].